A 411-amino-acid polypeptide reads, in one-letter code: Multidrug resistance protein MdtH (411 aa).

The next 11 membrane-spanning stretches (helical) occupy residues 13 to 33, 45 to 65, 73 to 95, 99 to 116, 139 to 159, 165 to 185, 213 to 233, 243 to 263, 288 to 308, 340 to 360, and 365 to 385; these read YFLL…FPLI, ALLV…LGIF, LGAK…FMGI, PWLL…GTLF, LLMI…SWLL, LVCL…AWLL, YVFT…ILPI, AAVR…LYPI, IIPI…GIFY, LGLA…YDMG, and IPQL…LGFY.

It belongs to the major facilitator superfamily. DHA1 family. MdtH (TC 2.A.1.2.21) subfamily.

It localises to the cell membrane. This is Multidrug resistance protein MdtH from Baumannia cicadellinicola subsp. Homalodisca coagulata.